Here is a 66-residue protein sequence, read N- to C-terminus: Stress-induced protein KIN1 (66 aa).

Polar residues predominate over residues 1–13 (MSETNKNAFQAGQ). The tract at residues 1 to 52 (MSETNKNAFQAGQTAGKAEEKSNVLLDKAKDAAAGAGAGAQQAGKSVSDAAA) is disordered. The span at 17 to 31 (KAEEKSNVLLDKAKD) shows a compositional bias: basic and acidic residues. 2 consecutive repeats follow at residues 31 to 35 (DAAAG) and 49 to 53 (DAAAG). A compositionally biased stretch (low complexity) spans 32-45 (AAAGAGAGAQQAGK).

The sequence is that of Stress-induced protein KIN1 (KIN1) from Arabidopsis thaliana (Mouse-ear cress).